Reading from the N-terminus, the 448-residue chain is N-succinylarginine dihydrolase (448 aa).

Substrate-binding positions include 19–28, Asn-110, and 137–138; these read GGLSYGNVAS and HR. Glu-174 is an active-site residue. A substrate-binding site is contributed by Arg-214. His-250 is a catalytic residue. Positions 252 and 365 each coordinate substrate. Cys-371 functions as the Nucleophile in the catalytic mechanism.

This sequence belongs to the succinylarginine dihydrolase family. As to quaternary structure, homodimer.

It carries out the reaction N(2)-succinyl-L-arginine + 2 H2O + 2 H(+) = N(2)-succinyl-L-ornithine + 2 NH4(+) + CO2. It participates in amino-acid degradation; L-arginine degradation via AST pathway; L-glutamate and succinate from L-arginine: step 2/5. Functionally, catalyzes the hydrolysis of N(2)-succinylarginine into N(2)-succinylornithine, ammonia and CO(2). The chain is N-succinylarginine dihydrolase from Pseudomonas paraeruginosa (strain DSM 24068 / PA7) (Pseudomonas aeruginosa (strain PA7)).